A 2353-amino-acid chain; its full sequence is Nonribosomal peptide synthetase 7 (2353 aa).

Residues 305–684 (TFSALNTRAN…AIEEVEDSAV (380 aa)) are adenylation 1. The 78-residue stretch at 776-853 (RDLTDSEKVV…QVAAAVQPQP (78 aa)) folds into the Carrier 1 domain. O-(pantetheine 4'-phosphoryl)serine is present on Ser-813. The interval 885–1147 (EDAFPVTPFQ…LMVAPLRVKV (263 aa)) is condensation 1. The segment at 1338–1725 (TYAGLAIKMN…QTNVFRQCAV (388 aa)) is adenylation 2. The Carrier 2 domain occupies 1826-1902 (EICSEAEREL…EQAALMVQGQ (77 aa)). Ser-1863 carries the post-translational modification O-(pantetheine 4'-phosphoryl)serine. The segment at 1939–2214 (EDIYPCSPGQ…NGNCANFLPY (276 aa)) is condensation 2.

Belongs to the NRP synthetase family.

Nonribosomal peptide synthesis (NRPS) is a key mechanism responsible for the biosynthesis of bioactive metabolites which are potentially contributing to organismal virulence. This is Nonribosomal peptide synthetase 7 (NRPS7) from Aspergillus fumigatus (strain ATCC MYA-4609 / CBS 101355 / FGSC A1100 / Af293) (Neosartorya fumigata).